We begin with the raw amino-acid sequence, 646 residues long: Peptidylprolyl isomerase domain and WD repeat-containing protein 1 (646 aa).

The disordered stretch occupies residues 1-30 (MAAESGSDFQQRRRRRRDPEEPEKTELSER). A2 is subject to N-acetylalanine. Positions 17-30 (RDPEEPEKTELSER) are enriched in basic and acidic residues. WD repeat units follow at residues 80 to 118 (ASMY…FWKK), 124 to 162 (EFVK…VFDV), 168 to 208 (INML…IYDG), 213 to 252 (QPLH…YWTG), 271 to 309 (TDLY…IFRF), 345 to 386 (AVER…VETN), and 401 to 453 (MQLA…MFTK). Over residues 455–478 (EPEDTKSADSDRDVFNEKPSKEEV) the composition is skewed to basic and acidic residues. Residues 455–490 (EPEDTKSADSDRDVFNEKPSKEEVMAATQAEGPKRV) are disordered. In terms of domain architecture, PPIase cyclophilin-type spans 490 to 645 (VSDSAIIHTS…EDVSIINITV (156 aa)).

The protein belongs to the cyclophilin-type PPIase family. PPIL1 subfamily. As to quaternary structure, identified in the spliceosome C complex.

The protein localises to the nucleus. It carries out the reaction [protein]-peptidylproline (omega=180) = [protein]-peptidylproline (omega=0). Its activity is regulated as follows. Inhibited by cyclosporin A (CsA). PPIase that catalyzes the cis-trans isomerization of proline imidic peptide bonds in oligopeptides and may therefore assist protein folding. May be involved in pre-mRNA splicing. This chain is Peptidylprolyl isomerase domain and WD repeat-containing protein 1, found in Homo sapiens (Human).